Here is a 465-residue protein sequence, read N- to C-terminus: Alpha-galacturonidase (465 aa).

11 to 78 (ITIAYIGGGS…GKWLYKACET (68 aa)) is a binding site for NAD(+). Residue Asn-157 participates in substrate binding. Position 179 (Cys-179) interacts with Mn(2+). His-180 functions as the Proton donor in the catalytic mechanism. Residue His-216 coordinates Mn(2+).

It belongs to the glycosyl hydrolase 4 family. As to quaternary structure, homotetramer. Requires NAD(+) as cofactor. Mn(2+) serves as cofactor.

The enzyme catalyses [(1-&gt;4)-alpha-D-galacturonosyl](n) + H2O = alpha-D-galacturonate + [(1-&gt;4)-alpha-D-galacturonosyl](n-1). In terms of biological role, alpha-galacturonidase able to catalyze the hydrolysis of the chromogenic substrate p-nitrophenyl-alpha-D-galacturonic acid (pNPalphaGalUA). It is probable that alpha-1,4-di-galacturonate (GalUA(2)) is the naturally occurring substrate. This chain is Alpha-galacturonidase, found in Thermoanaerobacterium saccharolyticum (strain DSM 8691 / JW/SL-YS485).